Reading from the N-terminus, the 585-residue chain is Squalene epoxidase 2, mitochondrial (585 aa).

A mitochondrion-targeting transit peptide spans 1-45; sequence MKPFVIRNLPRFQSTLRSSLLYTNHRPSSRFSLSTRRFTTGATYI. A helical membrane pass occupies residues 70–90; that stretch reads AKIALDQFIASLFTFLLLYIL. FAD is bound by residues 132–133, 152–153, Arg160, Arg231, Val247, Asp409, and Met422; these read VA and ER. 3 helical membrane-spanning segments follow: residues 493–513, 520–540, and 545–565; these read FDYLSLGGVFSSGPVALLSGL, LVLHFFAVAIYAVCRLMLPFP, and FWLGARIISSASSIIFPIIKA.

Belongs to the squalene monooxygenase family. FAD is required as a cofactor. In terms of tissue distribution, expressed mainly in inflorescences. Detected in seedlings, leaves, stems, and siliques.

The protein localises to the mitochondrion membrane. The enzyme catalyses squalene + reduced [NADPH--hemoprotein reductase] + O2 = (S)-2,3-epoxysqualene + oxidized [NADPH--hemoprotein reductase] + H2O + H(+). It functions in the pathway terpene metabolism; lanosterol biosynthesis; lanosterol from farnesyl diphosphate: step 2/3. Catalyzes the stereospecific oxidation of squalene to (S)-2,3-epoxysqualene, and is considered to be a rate-limiting enzyme in steroid biosynthesis. Produces primarily oxidosqualene. This Arabidopsis thaliana (Mouse-ear cress) protein is Squalene epoxidase 2, mitochondrial (SQE2).